The primary structure comprises 78 residues: DNA-directed RNA polymerase subunit omega (78 aa).

Belongs to the RNA polymerase subunit omega family. In cyanobacteria the RNAP catalytic core is composed of 2 alpha, 1 beta, 1 beta', 1 gamma and 1 omega subunit. When a sigma factor is associated with the core the holoenzyme is formed, which can initiate transcription.

It catalyses the reaction RNA(n) + a ribonucleoside 5'-triphosphate = RNA(n+1) + diphosphate. In terms of biological role, promotes RNA polymerase assembly. Latches the N- and C-terminal regions of the beta' subunit thereby facilitating its interaction with the beta and alpha subunits. The sequence is that of DNA-directed RNA polymerase subunit omega from Trichormus variabilis (strain ATCC 29413 / PCC 7937) (Anabaena variabilis).